The primary structure comprises 988 residues: Bifunctional glutamine synthetase adenylyltransferase/adenylyl-removing enzyme (988 aa).

Residues 1-472 (MTKRETVERR…RYSALFEQET (472 aa)) are adenylyl removase. The interval 476-988 (GEAGNLVFTG…AFVAVVKNGG (513 aa)) is adenylyl transferase.

The protein belongs to the GlnE family. Requires Mg(2+) as cofactor.

It carries out the reaction [glutamine synthetase]-O(4)-(5'-adenylyl)-L-tyrosine + phosphate = [glutamine synthetase]-L-tyrosine + ADP. The catalysed reaction is [glutamine synthetase]-L-tyrosine + ATP = [glutamine synthetase]-O(4)-(5'-adenylyl)-L-tyrosine + diphosphate. Involved in the regulation of glutamine synthetase GlnA, a key enzyme in the process to assimilate ammonia. When cellular nitrogen levels are high, the C-terminal adenylyl transferase (AT) inactivates GlnA by covalent transfer of an adenylyl group from ATP to specific tyrosine residue of GlnA, thus reducing its activity. Conversely, when nitrogen levels are low, the N-terminal adenylyl removase (AR) activates GlnA by removing the adenylyl group by phosphorolysis, increasing its activity. The regulatory region of GlnE binds the signal transduction protein PII (GlnB) which indicates the nitrogen status of the cell. The polypeptide is Bifunctional glutamine synthetase adenylyltransferase/adenylyl-removing enzyme (Agrobacterium fabrum (strain C58 / ATCC 33970) (Agrobacterium tumefaciens (strain C58))).